The sequence spans 194 residues: Anaphase-promoting complex subunit CDC26 (194 aa).

The interval 47–194 is disordered; that stretch reads EPMDQSEPPR…PSSNTRSHRH (148 aa). Composition is skewed to polar residues over residues 79–94 and 102–112; these read GECTRTSIAPTLTSAR and LTLSTPVNPVS. Low complexity-rich tracts occupy residues 154–166 and 174–194; these read DESPTPSDSPESP and TPGNPTSTSGGPSSNTRSHRH.

The protein belongs to the CDC26 family. The APC/C complex is probably composed of at least 12 subunits: apc-2, apc-10, apc-11, cdc-26, emb-1, emb-27, emb-30, mat-1, mat-2, mat-3, such-1 and gfi-3.

The protein resides in the nucleus. Its pathway is protein modification; protein ubiquitination. Probable component of the anaphase promoting complex/cyclosome (APC/C), a cell cycle-regulated E3 ubiquitin ligase that controls progression through mitosis and the G1 phase of the cell cycle. The APC/C complex acts by mediating ubiquitination and subsequent degradation of target proteins. Developmental role in early embryogenesis and the metaphase to anaphase transition in meiosis and mitosis. Required for embryonic anterior-posterior axis formation. The chain is Anaphase-promoting complex subunit CDC26 from Caenorhabditis elegans.